A 132-amino-acid chain; its full sequence is uncharacterized protein (132 aa).

A helical membrane pass occupies residues 105 to 125 (VHGYVVFWLSILCILIIIFVY).

Its subcellular location is the membrane. This is an uncharacterized protein from Methanocaldococcus jannaschii (strain ATCC 43067 / DSM 2661 / JAL-1 / JCM 10045 / NBRC 100440) (Methanococcus jannaschii).